The chain runs to 194 residues: Probable GTP-binding protein EngB (194 aa).

One can recognise an EngB-type G domain in the interval 22–194 (GKPEIALVGR…EVWHWIEQHI (173 aa)). GTP-binding positions include 30–37 (GRSNVGKS), 57–61 (GKTQT), 75–78 (DVPG), 142–145 (TKSD), and 175–177 (FSS). The Mg(2+) site is built by Ser37 and Thr59.

The protein belongs to the TRAFAC class TrmE-Era-EngA-EngB-Septin-like GTPase superfamily. EngB GTPase family. Mg(2+) is required as a cofactor.

Functionally, necessary for normal cell division and for the maintenance of normal septation. The sequence is that of Probable GTP-binding protein EngB from Leuconostoc mesenteroides subsp. mesenteroides (strain ATCC 8293 / DSM 20343 / BCRC 11652 / CCM 1803 / JCM 6124 / NCDO 523 / NBRC 100496 / NCIMB 8023 / NCTC 12954 / NRRL B-1118 / 37Y).